Reading from the N-terminus, the 1183-residue chain is MTSSGKIRIYELSKDLSLDNKDVLDAARKLAIAAKSHSSSISSLEANQIKDFLKKSNTINTTIKSSKNLDKQILSVKKNPVKTQKDQKTEPKKKNHDQTELSQAKLNTLLKPSQTLIKSQGSSQANNQKALKNKFPAKQQITSPSKPNKPLPPNPRVEVKPIISKPLTQAERAIPQSEQKKDGQFINQPKRSELAKKSIGQPKQINPQEPKRPLAPPSRPKIDIQDKKPLQPNNQKAKTRINQGEISPQKVGQGNIQKIKSQNKQNAPSRTPQPPTKGNTLELVGAPIRKEKPVNKPHTNEVRNKPVMPSRPGAPKPPTAANRQGLSNRPGSNNRIGGTGRPGSPNRQGPNRGGVANRTTQGQNRPGANNRAGAPVRSGSPNRGGMQNRPGVPTRSLGGPNRSNNRPGVPSGMRKPVAPSELMQLQKPQARPNAPQRKTDSPTSLRPKRENSTGARPPVNRPTPAAPKKPAHRPGGTAAAPRRTGRPDWDDSAKLDALRNKSPQKQRQKVHIIGENDDALTAERGGFAGEQQAVVLSASLARPSKPKVGKRNNGKPLTALKKRKKETTRQRQRRRAMELRASREAKLVRPEMIVVPEDNLTVQELADMLSVESSEIIKSLFFKGITATVTQSLDLATIETVAEEFGVPVLQDDVEEAAKKTVEMIEEGDLKYLIRRPPVVTVMGHVDHGKTSLLDAIRKARVAAGEAGGITQHIGAYQIETEHDGSTKKLTFLDTPGHEAFTAMRARGTRVTDVAILVVAADDGVRPQTLEAISHARAAKVPIVVAINKIDKEGSSPDRVKQELSEQDLLSEEWGGDVVMVPVSAIKGENIDKLLEMVLLVTEVEDLQANPDRLAKGTVIEAHLDKAKGPVATLLVQNGTLKSGDVVAAGPVLGKVRAMVDENGSRIKEAGPSCPVEALGFSEVPTAGDEFEVYPDEKAARAVVGERATDARAARLAQQMASRRVSLSSMSGQASEGELKELNIILKADVQGSLEAILGSLEQLPKDEVQVRVLLSAPGEITETDIDLAAASGAVIVGFNTSMASGAKRAADANGVDVREYEVIYKLLEDIQLAMEGLLEPEMIEEALGVAEVRAIFSIGKSAVAGCYVTNGKIQRNCRARVKRGKQIVFEGDLDSLKRNKDDVKDVSTGFECGIGCDRFANWEEGDQIEAFKLVTQRRKLNN.

2 disordered regions span residues 65–512 (SSKN…KVHI) and 540–579 (LARPSKPKVGKRNNGKPLTALKKRKKETTRQRQRRRAMEL). Over residues 83–99 (TQKDQKTEPKKKNHDQT) the composition is skewed to basic and acidic residues. Polar residues predominate over residues 100-130 (ELSQAKLNTLLKPSQTLIKSQGSSQANNQKA). The segment covering 220-229 (PKIDIQDKKP) has biased composition (basic and acidic residues). Polar residues predominate over residues 231-270 (QPNNQKAKTRINQGEISPQKVGQGNIQKIKSQNKQNAPSR). The span at 288-304 (IRKEKPVNKPHTNEVRN) shows a compositional bias: basic and acidic residues. Composition is skewed to polar residues over residues 321–336 (ANRQGLSNRPGSNNRI) and 357–367 (NRTTQGQNRPG). The segment covering 485 to 499 (GRPDWDDSAKLDALR) has biased composition (basic and acidic residues). Basic residues-rich tracts occupy residues 544–553 (SKPKVGKRNN) and 560–574 (LKKRKKETTRQRQRR). In terms of domain architecture, tr-type G spans 675 to 847 (RRPPVVTVMG…VLLVTEVEDL (173 aa)). The tract at residues 684 to 691 (GHVDHGKT) is G1. 684 to 691 (GHVDHGKT) contacts GTP. Residues 709–713 (GITQH) form a G2 region. Residues 734 to 737 (DTPG) are G3. GTP-binding positions include 734 to 738 (DTPGH) and 788 to 791 (NKID). A G4 region spans residues 788–791 (NKID). The G5 stretch occupies residues 824 to 826 (SAI).

Belongs to the TRAFAC class translation factor GTPase superfamily. Classic translation factor GTPase family. IF-2 subfamily.

It localises to the cytoplasm. In terms of biological role, one of the essential components for the initiation of protein synthesis. Protects formylmethionyl-tRNA from spontaneous hydrolysis and promotes its binding to the 30S ribosomal subunits. Also involved in the hydrolysis of GTP during the formation of the 70S ribosomal complex. The sequence is that of Translation initiation factor IF-2 from Prochlorococcus marinus (strain NATL2A).